The following is a 1051-amino-acid chain: Carbamoyl phosphate synthase large chain (1051 aa).

Positions 1 to 399 (MKETPKKVLV…SLQKAVRMLD (399 aa)) are carboxyphosphate synthetic domain. Positions 127, 167, 173, 174, 206, 208, 213, 239, 240, 241, 282, and 296 each coordinate ATP. One can recognise an ATP-grasp 1 domain in the interval 131–325 (RETMIENNLP…LAYVSAKLAL (195 aa)). Mg(2+)-binding residues include Q282, E296, and N298. Mn(2+)-binding residues include Q282, E296, and N298. The interval 400 to 548 (IGEPGVVGGK…LTYNGTEDDL (149 aa)) is oligomerization domain. The carbamoyl phosphate synthetic domain stretch occupies residues 549–930 (EFSQGNKLLI…LKSWLSSIPN (382 aa)). One can recognise an ATP-grasp 2 domain in the interval 673 to 863 (SKLLDKLGIS…LINESMKAIF (191 aa)). 10 residues coordinate ATP: R709, K748, I750, E755, G779, V780, H781, S782, Q822, and E834. Positions 822, 834, and 836 each coordinate Mg(2+). 3 residues coordinate Mn(2+): Q822, E834, and N836. The 122-residue stretch at 930 to 1051 (NRIPNKNGIA…FEISEYGGGI (122 aa)) folds into the MGS-like domain. Residues 931–1051 (RIPNKNGIAL…FEISEYGGGI (121 aa)) are allosteric domain.

It belongs to the CarB family. In terms of assembly, composed of two chains; the small (or glutamine) chain promotes the hydrolysis of glutamine to ammonia, which is used by the large (or ammonia) chain to synthesize carbamoyl phosphate. Tetramer of heterodimers (alpha,beta)4. The cofactor is Mg(2+). Mn(2+) serves as cofactor.

The catalysed reaction is hydrogencarbonate + L-glutamine + 2 ATP + H2O = carbamoyl phosphate + L-glutamate + 2 ADP + phosphate + 2 H(+). It catalyses the reaction hydrogencarbonate + NH4(+) + 2 ATP = carbamoyl phosphate + 2 ADP + phosphate + 2 H(+). Its pathway is amino-acid biosynthesis; L-arginine biosynthesis; carbamoyl phosphate from bicarbonate: step 1/1. It participates in pyrimidine metabolism; UMP biosynthesis via de novo pathway; (S)-dihydroorotate from bicarbonate: step 1/3. In terms of biological role, large subunit of the glutamine-dependent carbamoyl phosphate synthetase (CPSase). CPSase catalyzes the formation of carbamoyl phosphate from the ammonia moiety of glutamine, carbonate, and phosphate donated by ATP, constituting the first step of 2 biosynthetic pathways, one leading to arginine and/or urea and the other to pyrimidine nucleotides. The large subunit (synthetase) binds the substrates ammonia (free or transferred from glutamine from the small subunit), hydrogencarbonate and ATP and carries out an ATP-coupled ligase reaction, activating hydrogencarbonate by forming carboxy phosphate which reacts with ammonia to form carbamoyl phosphate. This is Carbamoyl phosphate synthase large chain from Saccharolobus islandicus (strain M.16.27) (Sulfolobus islandicus).